Here is a 243-residue protein sequence, read N- to C-terminus: Adenine phosphoribosyltransferase 1, chloroplastic (243 aa).

A chloroplast-targeting transit peptide spans 1–52; sequence MQTIIISPLVSHRLCLARAVPCNRLLNNHHRAPPSIRLSNHRSTTSLRLFSS. The residue at position 2 (Gln-2) is an N-acetylalanine.

This sequence belongs to the purine/pyrimidine phosphoribosyltransferase family. As to quaternary structure, homodimer.

The protein localises to the plastid. The protein resides in the chloroplast. It localises to the cytoplasm. It carries out the reaction AMP + diphosphate = 5-phospho-alpha-D-ribose 1-diphosphate + adenine. The protein operates within purine metabolism; AMP biosynthesis via salvage pathway; AMP from adenine: step 1/1. Its function is as follows. Catalyzes a salvage reaction resulting in the formation of AMP, that is energically less costly than de novo synthesis. Contributes primarily to the recycling of adenine into adenylate nucleotides, but is also involved in the inactivation of cytokinins by phosphoribosylation. Catalyzes the conversion of cytokinins from free bases (active form) to the corresponding nucleotides (inactive form). The protein is Adenine phosphoribosyltransferase 1, chloroplastic (APT1) of Arabidopsis thaliana (Mouse-ear cress).